The sequence spans 319 residues: Pre T-cell antigen receptor alpha (319 aa).

An N-terminal signal peptide occupies residues 1–16 (MAESWLLLLLALGCPA). Over 17-160 (LPTEVTTLLR…LRGTRALVLR (144 aa)) the chain is Extracellular. A disulfide bridge connects residues C58 and C118. N78 carries N-linked (GlcNAc...) asparagine glycosylation. The chain crosses the membrane as a helical span at residues 161 to 181 (LGALRLLLFKLLLLDVLLTCG). At 182–319 (RLHAPPAARG…PPADPSFPGG (138 aa)) the chain is on the cytoplasmic side. Residues 189–207 (ARGDPAGASGPGAPSLPAP) show a composition bias toward low complexity. Residues 189-293 (ARGDPAGASG…VLRAWSSGPS (105 aa)) form a disordered region. Residues 260–271 (RRRRVHTRRPRR) are compositionally biased toward basic residues.

In terms of assembly, heterodimer with TCRB; disulfide linked. This heterodimer assembles with CD3 proteins into a signaling-competent pre-T-cell receptor complex. Interacts with RHBDD1.

It is found in the membrane. The protein resides in the cell membrane. In terms of biological role, component of the pre-T-cell receptor complex (composed of PTCRA, TCRB and the CD3 complex) that has a crucial role in early T-cell development, particularly alpha-beta T cell differentiation. This is Pre T-cell antigen receptor alpha (PTCRA) from Bos taurus (Bovine).